A 379-amino-acid chain; its full sequence is 1-deoxy-D-xylulose 5-phosphate reductoisomerase (379 aa).

Threonine 10, glycine 11, serine 12, isoleucine 13, arginine 38, asparagine 39, and asparagine 121 together coordinate NADPH. Position 122 (lysine 122) interacts with 1-deoxy-D-xylulose 5-phosphate. Glutamate 123 is an NADPH binding site. A Mn(2+)-binding site is contributed by aspartate 147. The 1-deoxy-D-xylulose 5-phosphate site is built by serine 148, glutamate 149, serine 173, and histidine 196. Mn(2+) is bound at residue glutamate 149. Glycine 202 lines the NADPH pocket. Residues serine 209, asparagine 214, lysine 215, and glutamate 218 each coordinate 1-deoxy-D-xylulose 5-phosphate. Residue glutamate 218 participates in Mn(2+) binding.

The protein belongs to the DXR family. Mg(2+) serves as cofactor. Requires Mn(2+) as cofactor.

The enzyme catalyses 2-C-methyl-D-erythritol 4-phosphate + NADP(+) = 1-deoxy-D-xylulose 5-phosphate + NADPH + H(+). The protein operates within isoprenoid biosynthesis; isopentenyl diphosphate biosynthesis via DXP pathway; isopentenyl diphosphate from 1-deoxy-D-xylulose 5-phosphate: step 1/6. Its function is as follows. Catalyzes the NADPH-dependent rearrangement and reduction of 1-deoxy-D-xylulose-5-phosphate (DXP) to 2-C-methyl-D-erythritol 4-phosphate (MEP). The chain is 1-deoxy-D-xylulose 5-phosphate reductoisomerase from Chlamydia trachomatis serovar L2 (strain ATCC VR-902B / DSM 19102 / 434/Bu).